The following is a 164-amino-acid chain: Cyclin-dependent kinase inhibitor 1 (164 aa).

Serine 2 bears the N-acetylserine mark. Serine 2 participates in a covalent cross-link: Glycyl serine ester (Ser-Gly) (interchain with G-Cter in ubiquitin). The segment at 13 to 41 (HGSKACRRLFGPVDSEQLRRDCDALMAGC) adopts a C4-type zinc-finger fold. The required for binding cyclins stretch occupies residues 17–24 (ACRRLFGP). The interval 53–58 (FVTETP) is required for binding CDKs. The segment at 80–164 (AGPRGGRDDL…RRLIFSKRKP (85 aa)) is disordered. A Phosphoserine; by GSK3-beta modification is found at serine 114. Serine 130 is subject to Phosphoserine. The PIP-box K+4 motif motif lies at 140–164 (RKRRQTSMTDFYHSKRRLIFSKRKP). Positions 141 to 156 (KRRQTSMTDFYHSKRR) match the Nuclear localization signal motif. A Phosphothreonine; by PKA, PKB/AKT1, PIM1 and PIM2 modification is found at threonine 145. Serine 146 is subject to Phosphoserine; by PKC and NUAK1. The interval 152-164 (HSKRRLIFSKRKP) is interaction with TRIM39. Basic residues predominate over residues 153 to 164 (SKRRLIFSKRKP). Serine 160 carries the phosphoserine modification.

This sequence belongs to the CDI family. In terms of assembly, interacts with HDAC1; the interaction is prevented by competitive binding of C10orf90/FATS to HDAC1 facilitating acetylation and protein stabilization of CDKN1A/p21. Interacts with MKRN1. Interacts with PSMA3. Interacts with PCNA. Component of the ternary complex, cyclin D-CDK4-CDKN1A. Interacts (via its N-terminal domain) with CDK4; the interaction promotes the assembly of the cyclin D-CDK4 complex, its nuclear translocation and promotes the cyclin D-dependent enzyme activity of CDK4. Binding to CDK2 leads to CDK2/cyclin E inactivation at the G1-S phase DNA damage checkpoint, thereby arresting cells at the G1-S transition during DNA repair. Interacts with PIM1. Interacts with STK11 and NUAK1. Interacts with DTL and TRIM39. Interacts with PKP3; the interaction sequesters CDKN1A to the cytoplasm thereby repressing its role as an inhibitor of CDK4- and CDK6-driven RB1 phosphorylation. Phosphorylation of Thr-145 by Akt or of Ser-146 by PKC impairs binding to PCNA. Phosphorylation at Ser-114 by GSK3-beta enhances ubiquitination by the DCX(DTL) complex. Phosphorylation of Thr-145 by PIM2 enhances protein stability and inhibits cell proliferation. Phosphorylation of Thr-145 by PIM1 results in the relocation of CDKN1A to the cytoplasm and enhanced CDKN1A protein stability. UV radiation-induced phosphorylation at Ser-146 by NUAK1 leads to its degradation. In terms of processing, ubiquitinated by MKRN1; leading to polyubiquitination and 26S proteasome-dependent degradation. Ubiquitinated by the DCX(DTL) complex, also named CRL4(CDT2) complex, leading to its degradation during S phase or following UV irradiation. Ubiquitination by the DCX(DTL) complex is essential to control replication licensing and is PCNA-dependent: interacts with PCNA via its PIP-box, while the presence of the containing the 'K+4' motif in the PIP box, recruit the DCX(DTL) complex, leading to its degradation. Ubiquitination at Ser-2 leads to degradation by the proteasome pathway. Ubiquitinated by RNF114; leading to proteasomal degradation. Post-translationally, acetylation leads to protein stability. Acetylated in vitro on Lys-141, Lys-154, Lys-161 and Lys-163. Deacetylation by HDAC1 is prevented by competitive binding of C10orf90/FATS to HDAC1.

It is found in the cytoplasm. The protein localises to the nucleus. In terms of biological role, may be involved in p53/TP53 mediated inhibition of cellular proliferation in response to DNA damage. Binds to and inhibits cyclin-dependent kinase activity, preventing phosphorylation of critical cyclin-dependent kinase substrates and blocking cell cycle progression. Functions in the nuclear localization and assembly of cyclin D-CDK4 complex and promotes its kinase activity towards RB1. At higher stoichiometric ratios, inhibits the kinase activity of the cyclin D-CDK4 complex. Inhibits DNA synthesis by DNA polymerase delta by competing with POLD3 for PCNA binding. Plays an important role in controlling cell cycle progression and DNA damage-induced G2 arrest. Negatively regulates the CDK4- and CDK6-driven phosphorylation of RB1 in keratinocytes, thereby resulting in the release of E2F1 and subsequent transcription of E2F1-driven G1/S phase promoting genes. This chain is Cyclin-dependent kinase inhibitor 1 (CDKN1A), found in Felis catus (Cat).